Consider the following 355-residue polypeptide: Meiotic coiled-coil protein 4 (355 aa).

The stretch at 298-338 (QRLSRTEINKEIIEIEKLELEVVQFQMSIANLINTQVEVTN) forms a coiled coil.

The protein localises to the cytoplasm. Its function is as follows. Has a role in meiosis. In Schizosaccharomyces pombe (strain 972 / ATCC 24843) (Fission yeast), this protein is Meiotic coiled-coil protein 4 (mcp4).